A 464-amino-acid chain; its full sequence is Anthocyanidin 3-O-galactosyltransferase 3GT1 (464 aa).

Residues Ser-19 and His-21 each contribute to the an anthocyanidin site. His-21 serves as the catalytic Proton acceptor. N-linked (GlcNAc...) asparagine glycosylation is present at Asn-38. Asp-121 (charge relay) is an active-site residue. His-152 contributes to the an anthocyanidin binding site. 7 residues coordinate UDP-alpha-D-glucose: Ala-342, Gln-344, His-359, Trp-362, Asn-363, Ser-364, and Glu-367. An anthocyanidin is bound at residue Gly-382. Residue Asp-383 coordinates UDP-alpha-D-glucose.

It belongs to the UDP-glycosyltransferase family. In terms of assembly, monomer. In terms of tissue distribution, mostly expressed in leaves and flowers and, to a lower extent, in roots. In flowers, mainly observed in petals, toruses and scapes, and at lower levels in pistils and stamens.

It catalyses the reaction cyanidin + UDP-alpha-D-galactose = cyanidin 3-O-beta-D-galactoside + UDP + H(+). The enzyme catalyses cyanidin + UDP-alpha-D-glucose = cyanidin 3-O-beta-D-glucoside + UDP + H(+). The catalysed reaction is delphinidin + UDP-alpha-D-glucose = delphinidin 3-O-beta-D-glucoside + UDP. It carries out the reaction malvidin + UDP-alpha-D-glucose = malvidin 3-O-beta-D-glucoside + UDP. It catalyses the reaction delphinidin + UDP-alpha-D-galactose = delphinidin 3-O-beta-D-galactoside + UDP + H(+). The enzyme catalyses pelargonidin + UDP-alpha-D-galactose = pelargonidin 3-O-beta-D-galactoside betaine + UDP. The catalysed reaction is peonidin + UDP-alpha-D-galactose = peonidin 3-O-beta-D-galactoside + UDP. It carries out the reaction malvidin + UDP-alpha-D-galactose = malvidin 3-O-beta-D-galactoside + UDP + H(+). It catalyses the reaction petunidin + UDP-alpha-D-galactose = petunidin 3-O-beta-D-galactoside + UDP. The enzyme catalyses an anthocyanidin + UDP-alpha-D-glucose + H(+) = an anthocyanidin 3-O-beta-D-glucoside + UDP. The catalysed reaction is an anthocyanidin + UDP-alpha-D-galactose = an anthocyanidin 3-O-beta-D-galactoside + UDP. Its pathway is pigment biosynthesis; anthocyanin biosynthesis. Its function is as follows. Flavonoid 3-O-glycosyltransferase involved in the biosynthesis of anthocyanins conferring flower red/pink colors, mainly anthocyanidin 3-O-glycosides. Catalyzes the addition of UDP-sugar to the 3-OH of anthocyanidin, with a preference for UDP-galactose (UDP-Gal) as sugar donor and cyanidin as substrate; able to use delphinidin, pelargonidin, peonidin, malvidin and petunidin as substrates in the presence of UDP-Gal. Can also use UDP-glucose (UDP-Glu) as sugar donor with delphinidin, cyanidin and malvidin as substrates, but not active on pelargonidin, peonidin and petunidin. In Rhododendron delavayi (Rhododendron), this protein is Anthocyanidin 3-O-galactosyltransferase 3GT1.